The primary structure comprises 1245 residues: Trafficking protein particle complex II-specific subunit 130 homolog (1245 aa).

2 disordered regions span residues 488–524 (GDGS…TSLP) and 884–903 (HVGG…TRKV). 2 stretches are compositionally biased toward low complexity: residues 495–507 (ANSK…SASN) and 888–898 (TDASKTSSSST).

This sequence belongs to the TMEM1 family. As to quaternary structure, part of the multisubunit TRAPP (transport protein particle) II complex composed of BET3, BET5, TRS20, TRS23, TRS31, TRS33, TRS65, TRS85, TRS120 and TRS130.

The protein localises to the golgi apparatus. It localises to the trans-Golgi network. The protein resides in the early endosome. Specific subunit of the TRAPP II complex, a highly conserved vesicle tethering complex that is required for the proper transport of proteins in post-Golgi trafficking pathways to the growing cell plate in mitotic active cells. This Oryza sativa subsp. japonica (Rice) protein is Trafficking protein particle complex II-specific subunit 130 homolog.